Here is a 95-residue protein sequence, read N- to C-terminus: UPF0235 protein Swoo_1329 (95 aa).

The protein belongs to the UPF0235 family.

The chain is UPF0235 protein Swoo_1329 from Shewanella woodyi (strain ATCC 51908 / MS32).